We begin with the raw amino-acid sequence, 303 residues long: Trans-enoyl reductase tazE (303 aa).

Residues 1-26 (MTAEHDAAILPKPGGPLAVGKRATPE) form a disordered region. 44–49 (CDYYQR) serves as a coordination point for NADP(+). Residue 136–143 (LAVLTALT) coordinates substrate. NADP(+) is bound by residues 170-173 (SSSV), 193-196 (SPKH), Y211, and 246-247 (LD). A substrate-binding site is contributed by 265 to 269 (VLPEC).

It belongs to the zinc-containing alcohol dehydrogenase family.

It participates in secondary metabolite biosynthesis. Trans-enoyl reductase; part of the gene cluster that mediates the biosynthesis of azaterrilone A and other azaphilones, a class of fungal metabolites characterized by a highly oxygenated pyrano-quinone bicyclic core and exhibiting a broad range of bioactivities. The first step of the pathway begins with the non-reducing polyketide synthase tazA that assembles one acetyl-CoA starter unit, five malonyl-CoA units, and catalyzes a series of Claisen condensations, methylation, PT-mediated cyclization, and finally releases the first hexaketide precursor through the R-domain. The tazA product then undergoes reduction on its terminal ketone and the following pyran-ring formation by yet undetermined enzyme(s). Dehydration and enoyl reduction, possibly involving the trans-enoyl reductase tazE leads to the next intermediate. TazD is predicted as an acetyltransferase and might catalyze the acetylation steps leading to the synthesis of azaterrilone A. Azaterrilone A is not the final product of the taz pathway and both the highly reducing polyketide synthase tazB and the dual enzyme tazHJ catalyze late steps of the pathway, leading to the production of the 2 final stereoisomers that contain additional polyketide modification whose structures have still to be determined. The chain is Trans-enoyl reductase tazE from Aspergillus terreus (strain NIH 2624 / FGSC A1156).